The sequence spans 704 residues: Plasma membrane ATPase 2 (704 aa).

The helical transmembrane segment at 1–16 threads the bilayer; sequence CSIAVGMIIEIIVMYP. Residues 17-26 are Extracellular-facing; it reads IQHRKYRPGI. The helical transmembrane segment at 27-48 threads the bilayer; it reads DNLLVLLIGGIPIAMPTVLSVT. At 49 to 395 the chain is on the cytoplasmic side; it reads MAIGSHRLAQ…TSRAIFQRMK (347 aa). D81 (4-aspartylphosphate intermediate) is an active-site residue. Mg(2+) is bound by residues D340 and D344. A helical membrane pass occupies residues 396–417; the sequence is NYTIYAVSITIRIVLGFMLLAL. At 418–422 the chain is on the extracellular side; that stretch reads IWKFD. A helical transmembrane segment spans residues 423 to 445; that stretch reads FPPFMVLIIAILNDGTIMTISKD. The Cytoplasmic portion of the chain corresponds to 446–461; the sequence is RVKPSPLPDSWKLAEI. Residues 462 to 482 traverse the membrane as a helical segment; the sequence is FTTGVVLGGYLAMMTVIFFWA. At 483 to 507 the chain is on the extracellular side; sequence AYETQFFPRVFGVSTLQRTATDDFR. Residues 508 to 528 traverse the membrane as a helical segment; that stretch reads KLASAIYLQVSTISQALIFVT. Over 529-540 the chain is Cytoplasmic; the sequence is RSRSWSFVERPG. A helical transmembrane segment spans residues 541-561; the sequence is LLLVVALIVAQLVATLIAVYA. At 562–570 the chain is on the extracellular side; the sequence is SWSFAAIEG. The helical transmembrane segment at 571–591 threads the bilayer; the sequence is IGWGWAGVIWLYNLVFYFPLD. Residues 592-704 lie on the Cytoplasmic side of the membrane; the sequence is IIKFLIRYAL…IETIQQSYTV (113 aa).

It belongs to the cation transport ATPase (P-type) (TC 3.A.3) family. Type IIIA subfamily. As to quaternary structure, possibly exists as a homodimer or a homotrimer.

It localises to the cell membrane. It carries out the reaction ATP + H2O + H(+)(in) = ADP + phosphate + 2 H(+)(out). Functionally, the plasma membrane ATPase of plants and fungi is a hydrogen ion pump. The proton gradient it generates drives the active transport of nutrients by H(+)-symport. The resulting external acidification and/or internal alkinization may mediate growth responses. This Solanum lycopersicum (Tomato) protein is Plasma membrane ATPase 2 (LHA2).